The sequence spans 90 residues: Defensin-like protein 178 (90 aa).

Residues 1–23 form the signal peptide; sequence MAKATSSLVVPIIFLVIFALVEQ. 4 cysteine pairs are disulfide-bonded: cysteine 27–cysteine 66, cysteine 36–cysteine 55, cysteine 39–cysteine 60, and cysteine 43–cysteine 62.

The protein belongs to the DEFL family.

The protein localises to the secreted. The polypeptide is Defensin-like protein 178 (LCR64) (Arabidopsis thaliana (Mouse-ear cress)).